Reading from the N-terminus, the 408-residue chain is Acetate kinase (408 aa).

N7 serves as a coordination point for Mg(2+). K14 contributes to the ATP binding site. Residue R98 coordinates substrate. The Proton donor/acceptor role is filled by D155. ATP is bound by residues H214–G218, D289–R291, and G337–N341. Mg(2+) is bound at residue E390.

Belongs to the acetokinase family. In terms of assembly, homodimer. Mg(2+) serves as cofactor. Mn(2+) is required as a cofactor.

Its subcellular location is the cytoplasm. It catalyses the reaction acetate + ATP = acetyl phosphate + ADP. It functions in the pathway metabolic intermediate biosynthesis; acetyl-CoA biosynthesis; acetyl-CoA from acetate: step 1/2. Functionally, catalyzes the formation of acetyl phosphate from acetate and ATP. Can also catalyze the reverse reaction. The sequence is that of Acetate kinase from Cyanothece sp. (strain PCC 7425 / ATCC 29141).